We begin with the raw amino-acid sequence, 167 residues long: MLCFERRLPSDTPADLEMAFTFEQRERSRLRFPLPDGREAAFLIERGAPLVEGERLGTAEGLVLAIQAKPELLMEVRTSDPLTLVRAAYHLGNRHVRLEIGAHWLRLPPDYVLRDMLMRLGVEVFEVTAPYQPESGAYGGGHHHSHSHHEGDEFHSKPRLHHFGGSQ.

Residues 135-167 (SGAYGGGHHHSHSHHEGDEFHSKPRLHHFGGSQ) form a disordered region. Over residues 157–167 (KPRLHHFGGSQ) the composition is skewed to basic residues.

Belongs to the UreE family.

The protein localises to the cytoplasm. Involved in urease metallocenter assembly. Binds nickel. Probably functions as a nickel donor during metallocenter assembly. This Nitrosococcus oceani (strain ATCC 19707 / BCRC 17464 / JCM 30415 / NCIMB 11848 / C-107) protein is Urease accessory protein UreE.